Consider the following 485-residue polypeptide: Cysteine--tRNA ligase (485 aa).

Cysteine 27 provides a ligand contact to Zn(2+). The 'HIGH' region signature appears at 29–39 (ITAYDLCHIGH). Positions 208, 233, and 237 each coordinate Zn(2+). The 'KMSKS' region signature appears at 265 to 269 (KMSKS). Lysine 268 contacts ATP.

This sequence belongs to the class-I aminoacyl-tRNA synthetase family. In terms of assembly, monomer. Zn(2+) serves as cofactor.

It localises to the cytoplasm. It carries out the reaction tRNA(Cys) + L-cysteine + ATP = L-cysteinyl-tRNA(Cys) + AMP + diphosphate. In Nitratidesulfovibrio vulgaris (strain DSM 19637 / Miyazaki F) (Desulfovibrio vulgaris), this protein is Cysteine--tRNA ligase.